The chain runs to 355 residues: Sulfate/thiosulfate import ATP-binding protein CysA (355 aa).

The 231-residue stretch at 3 to 233 (IIINNVSKQF…PASPFVMGFI (231 aa)) folds into the ABC transporter domain. An ATP-binding site is contributed by 35–42 (GPSGSGKS).

This sequence belongs to the ABC transporter superfamily. Sulfate/tungstate importer (TC 3.A.1.6) family. As to quaternary structure, the complex is composed of two ATP-binding proteins (CysA), two transmembrane proteins (CysT and CysW) and a solute-binding protein (CysP).

The protein localises to the cell inner membrane. It catalyses the reaction sulfate(out) + ATP + H2O = sulfate(in) + ADP + phosphate + H(+). The enzyme catalyses thiosulfate(out) + ATP + H2O = thiosulfate(in) + ADP + phosphate + H(+). Part of the ABC transporter complex CysAWTP involved in sulfate/thiosulfate import. Responsible for energy coupling to the transport system. The chain is Sulfate/thiosulfate import ATP-binding protein CysA from Synechocystis sp. (strain ATCC 27184 / PCC 6803 / Kazusa).